Consider the following 277-residue polypeptide: Alternative cytochrome c oxidase subunit 2 (277 aa).

The Periplasmic portion of the chain corresponds to 1 to 40; it reads MAVALILLLIAIGSVLFHLFSPWWWTPIATNWGYIDDTIN. Residues 41–61 traverse the membrane as a helical segment; that stretch reads ITFWITGFVFTAVILFMAYCV. Over 62-83 the chain is Cytoplasmic; that stretch reads FRFHHKEGRQAAYNPENKKLEW. Residues 84–104 traverse the membrane as a helical segment; sequence WLSVGTGVGVAAMLAPGLVVW. The Periplasmic portion of the chain corresponds to 105-277; that stretch reads HQFVTVPADA…VRAKYNSGDD (173 aa). The Cu cation site is built by His-190, Cys-225, Cys-229, and His-233.

Belongs to the cytochrome c oxidase subunit 2 family.

Its subcellular location is the cell membrane. The enzyme catalyses 4 Fe(II)-[cytochrome c] + O2 + 8 H(+)(in) = 4 Fe(III)-[cytochrome c] + 2 H2O + 4 H(+)(out). Functionally, cytochrome c oxidase is the component of the respiratory chain that catalyzes the reduction of oxygen to water. Subunits 1-3 form the functional core of the enzyme complex. Subunit 2 transfers the electrons from cytochrome c via its binuclear copper A center to the bimetallic center of the catalytic subunit 1. This chain is Alternative cytochrome c oxidase subunit 2 (coxM), found in Bradyrhizobium diazoefficiens (strain JCM 10833 / BCRC 13528 / IAM 13628 / NBRC 14792 / USDA 110).